Consider the following 248-residue polypeptide: Ubiquinone/menaquinone biosynthesis C-methyltransferase UbiE (248 aa).

Positions 68 and 92 each coordinate S-adenosyl-L-methionine.

This sequence belongs to the class I-like SAM-binding methyltransferase superfamily. MenG/UbiE family.

The catalysed reaction is a 2-demethylmenaquinol + S-adenosyl-L-methionine = a menaquinol + S-adenosyl-L-homocysteine + H(+). It catalyses the reaction a 2-methoxy-6-(all-trans-polyprenyl)benzene-1,4-diol + S-adenosyl-L-methionine = a 5-methoxy-2-methyl-3-(all-trans-polyprenyl)benzene-1,4-diol + S-adenosyl-L-homocysteine + H(+). It participates in quinol/quinone metabolism; menaquinone biosynthesis; menaquinol from 1,4-dihydroxy-2-naphthoate: step 2/2. Its pathway is cofactor biosynthesis; ubiquinone biosynthesis. In terms of biological role, methyltransferase required for the conversion of demethylmenaquinol (DMKH2) to menaquinol (MKH2) and the conversion of 2-polyprenyl-6-methoxy-1,4-benzoquinol (DDMQH2) to 2-polyprenyl-3-methyl-6-methoxy-1,4-benzoquinol (DMQH2). The sequence is that of Ubiquinone/menaquinone biosynthesis C-methyltransferase UbiE from Rickettsia bellii (strain OSU 85-389).